The primary structure comprises 176 residues: dCTP deaminase (176 aa).

DCTP is bound by residues arginine 99–arginine 104 and aspartate 115. The Proton donor/acceptor role is filled by glutamate 125. Position 163 (glutamine 163) interacts with dCTP.

It belongs to the dCTP deaminase family. As to quaternary structure, homotrimer.

The catalysed reaction is dCTP + H2O + H(+) = dUTP + NH4(+). It participates in pyrimidine metabolism; dUMP biosynthesis; dUMP from dCTP (dUTP route): step 1/2. Functionally, catalyzes the deamination of dCTP to dUTP. This chain is dCTP deaminase, found in Pyrobaculum aerophilum (strain ATCC 51768 / DSM 7523 / JCM 9630 / CIP 104966 / NBRC 100827 / IM2).